Consider the following 1409-residue polypeptide: L-2-aminoadipate reductase large subunit (1409 aa).

The region spanning Gln-858–Leu-937 is the Carrier domain. The residue at position 896 (Ser-896) is an O-(pantetheine 4'-phosphoryl)serine.

This sequence belongs to the ATP-dependent AMP-binding enzyme family. Heterodimer of an alpha and a beta subunit. It depends on pantetheine 4'-phosphate as a cofactor.

It carries out the reaction (S)-2-amino-6-oxohexanoate + NADP(+) + H2O = L-2-aminoadipate + NADPH + 2 H(+). It catalyses the reaction (S)-2-amino-6-oxohexanoate + NAD(+) + H2O = L-2-aminoadipate + NADH + 2 H(+). The enzyme catalyses (S)-2-amino-6-oxohexanoate + AMP + diphosphate + NADP(+) = L-2-aminoadipate + ATP + NADPH + H(+). The protein operates within amino-acid biosynthesis; L-lysine biosynthesis via AAA pathway; L-lysine from L-alpha-aminoadipate (fungal route): step 1/3. In terms of biological role, catalyzes the activation of alpha-aminoadipate by ATP-dependent adenylation and the reduction of activated alpha-aminoadipate by NADPH. The activated alpha-aminoadipate is bound to the phosphopantheinyl group of the enzyme itself before it is reduced to (S)-2-amino-6-oxohexanoate. The sequence is that of L-2-aminoadipate reductase large subunit (lys2) from Penicillium chrysogenum (Penicillium notatum).